The sequence spans 318 residues: Transaldolase (318 aa).

Lys-126 functions as the Schiff-base intermediate with substrate in the catalytic mechanism.

The protein belongs to the transaldolase family. Type 1 subfamily. As to quaternary structure, homodimer.

It is found in the cytoplasm. The enzyme catalyses D-sedoheptulose 7-phosphate + D-glyceraldehyde 3-phosphate = D-erythrose 4-phosphate + beta-D-fructose 6-phosphate. Its pathway is carbohydrate degradation; pentose phosphate pathway; D-glyceraldehyde 3-phosphate and beta-D-fructose 6-phosphate from D-ribose 5-phosphate and D-xylulose 5-phosphate (non-oxidative stage): step 2/3. Its function is as follows. Transaldolase is important for the balance of metabolites in the pentose-phosphate pathway. The protein is Transaldolase of Cupriavidus metallidurans (strain ATCC 43123 / DSM 2839 / NBRC 102507 / CH34) (Ralstonia metallidurans).